Reading from the N-terminus, the 1342-residue chain is DNA-directed RNA polymerase subunit beta (1342 aa).

This sequence belongs to the RNA polymerase beta chain family. In terms of assembly, the RNAP catalytic core consists of 2 alpha, 1 beta, 1 beta' and 1 omega subunit. When a sigma factor is associated with the core the holoenzyme is formed, which can initiate transcription.

It carries out the reaction RNA(n) + a ribonucleoside 5'-triphosphate = RNA(n+1) + diphosphate. Functionally, DNA-dependent RNA polymerase catalyzes the transcription of DNA into RNA using the four ribonucleoside triphosphates as substrates. The sequence is that of DNA-directed RNA polymerase subunit beta from Salmonella typhi.